Here is a 207-residue protein sequence, read N- to C-terminus: Cytochrome c biogenesis ATP-binding export protein CcmA (207 aa).

In terms of domain architecture, ABC transporter spans 2–204 (LECENLSCTR…TTIDIRNFNR (203 aa)). 34–41 (GPNGSGKT) contributes to the ATP binding site.

This sequence belongs to the ABC transporter superfamily. CcmA exporter (TC 3.A.1.107) family. In terms of assembly, the complex is composed of two ATP-binding proteins (CcmA) and two transmembrane proteins (CcmB).

Its subcellular location is the cell membrane. The catalysed reaction is heme b(in) + ATP + H2O = heme b(out) + ADP + phosphate + H(+). Functionally, part of the ABC transporter complex CcmAB involved in the biogenesis of c-type cytochromes; once thought to export heme, this seems not to be the case, but its exact role is uncertain. Responsible for energy coupling to the transport system. In Wolbachia pipientis wMel, this protein is Cytochrome c biogenesis ATP-binding export protein CcmA.